Here is a 270-residue protein sequence, read N- to C-terminus: Orotidine 5'-phosphate decarboxylase (270 aa).

Residues Asp-39, 61–63 (KTH), 93–102 (DRKFADIGNT), Tyr-221, and Arg-239 each bind substrate. Lys-95 serves as the catalytic Proton donor.

Belongs to the OMP decarboxylase family.

It carries out the reaction orotidine 5'-phosphate + H(+) = UMP + CO2. The protein operates within pyrimidine metabolism; UMP biosynthesis via de novo pathway; UMP from orotate: step 2/2. The polypeptide is Orotidine 5'-phosphate decarboxylase (URA3) (Candida dubliniensis (strain CD36 / ATCC MYA-646 / CBS 7987 / NCPF 3949 / NRRL Y-17841) (Yeast)).